A 356-amino-acid polypeptide reads, in one-letter code: Protein MGF 360-19R (356 aa).

The ANK repeat unit spans residues 61 to 93 (LLNTALMKAVQENNYELIMLFTEWGANINYGLL).

It belongs to the asfivirus MGF 360 family.

Its function is as follows. Plays a role in virus cell tropism, and may be required for efficient virus replication in macrophages. This chain is Protein MGF 360-19R, found in African swine fever virus (isolate Pig/Kenya/KEN-50/1950) (ASFV).